We begin with the raw amino-acid sequence, 409 residues long: Menaquinone reductase (409 aa).

Residues 11–15, 44–47, Arg-101, Val-125, Asp-288, and 300–301 contribute to the FAD site; these read GAGPA, CGDG, and GI.

Belongs to the geranylgeranyl reductase family. FAD serves as cofactor.

The catalysed reaction is menaquinone-9 + AH2 = beta-dihydromenaquinone-9 + A. It functions in the pathway quinol/quinone metabolism; menaquinone biosynthesis. Functionally, catalyzes the reduction of a single double bond in the isoprenoid tail of menaquinone (MK-9) in M.smegmatis, likely the beta-isoprene unit, forming the predominant form of menaquinone found in mycobacteria, MK-9(II-H2). The protein is Menaquinone reductase of Mycolicibacterium smegmatis (strain ATCC 700084 / mc(2)155) (Mycobacterium smegmatis).